A 133-amino-acid polypeptide reads, in one-letter code: S-adenosylmethionine decarboxylase proenzyme (133 aa).

Residue Ser-64 is the Schiff-base intermediate with substrate; via pyruvic acid of the active site. The residue at position 64 (Ser-64) is a Pyruvic acid (Ser); by autocatalysis. The active-site Proton acceptor; for processing activity is His-69. Cys-84 functions as the Proton donor; for catalytic activity in the catalytic mechanism.

It belongs to the prokaryotic AdoMetDC family. Type 1 subfamily. In terms of assembly, heterotetramer of two alpha and two beta chains arranged as a dimer of alpha/beta heterodimers. The cofactor is pyruvate. In terms of processing, is synthesized initially as an inactive proenzyme. Formation of the active enzyme involves a self-maturation process in which the active site pyruvoyl group is generated from an internal serine residue via an autocatalytic post-translational modification. Two non-identical subunits are generated from the proenzyme in this reaction, and the pyruvate is formed at the N-terminus of the alpha chain, which is derived from the carboxyl end of the proenzyme. The post-translation cleavage follows an unusual pathway, termed non-hydrolytic serinolysis, in which the side chain hydroxyl group of the serine supplies its oxygen atom to form the C-terminus of the beta chain, while the remainder of the serine residue undergoes an oxidative deamination to produce ammonia and the pyruvoyl group blocking the N-terminus of the alpha chain.

It catalyses the reaction S-adenosyl-L-methionine + H(+) = S-adenosyl 3-(methylsulfanyl)propylamine + CO2. It participates in amine and polyamine biosynthesis; S-adenosylmethioninamine biosynthesis; S-adenosylmethioninamine from S-adenosyl-L-methionine: step 1/1. Catalyzes the decarboxylation of S-adenosylmethionine to S-adenosylmethioninamine (dcAdoMet), the propylamine donor required for the synthesis of the polyamines spermine and spermidine from the diamine putrescine. This is S-adenosylmethionine decarboxylase proenzyme from Persephonella marina (strain DSM 14350 / EX-H1).